The following is a 363-amino-acid chain: NAD(P)H-quinone oxidoreductase subunit 1, chloroplastic (363 aa).

6 consecutive transmembrane segments (helical) span residues 28–48, 98–118, 127–147, 248–268, 300–320, and 343–363; these read WVLV…LVIV, FSIG…VIPF, LPIG…GLLM, YSGI…LVSS, VFGM…FLFI, and FLLP…LFSL.

It belongs to the complex I subunit 1 family. NDH is composed of at least 16 different subunits, 5 of which are encoded in the nucleus.

The protein resides in the plastid. It is found in the chloroplast thylakoid membrane. It carries out the reaction a plastoquinone + NADH + (n+1) H(+)(in) = a plastoquinol + NAD(+) + n H(+)(out). It catalyses the reaction a plastoquinone + NADPH + (n+1) H(+)(in) = a plastoquinol + NADP(+) + n H(+)(out). Its function is as follows. NDH shuttles electrons from NAD(P)H:plastoquinone, via FMN and iron-sulfur (Fe-S) centers, to quinones in the photosynthetic chain and possibly in a chloroplast respiratory chain. The immediate electron acceptor for the enzyme in this species is believed to be plastoquinone. Couples the redox reaction to proton translocation, and thus conserves the redox energy in a proton gradient. This Cucumis sativus (Cucumber) protein is NAD(P)H-quinone oxidoreductase subunit 1, chloroplastic.